Reading from the N-terminus, the 106-residue chain is Large ribosomal subunit protein uL24 (106 aa).

This sequence belongs to the universal ribosomal protein uL24 family. Part of the 50S ribosomal subunit.

In terms of biological role, one of two assembly initiator proteins, it binds directly to the 5'-end of the 23S rRNA, where it nucleates assembly of the 50S subunit. Functionally, one of the proteins that surrounds the polypeptide exit tunnel on the outside of the subunit. The sequence is that of Large ribosomal subunit protein uL24 from Thermosipho africanus (strain TCF52B).